A 125-amino-acid chain; its full sequence is Small ribosomal subunit protein mS41 (125 aa).

The N-terminal 10 residues, Met-1–Ala-10, are a transit peptide targeting the mitochondrion. Residues Ser-103–Lys-125 are disordered.

Belongs to the mitochondrion-specific ribosomal protein mS41 family.

The protein localises to the mitochondrion. In terms of biological role, involved in telomere length regulation. The polypeptide is Small ribosomal subunit protein mS41 (FYV4) (Candida glabrata (strain ATCC 2001 / BCRC 20586 / JCM 3761 / NBRC 0622 / NRRL Y-65 / CBS 138) (Yeast)).